The primary structure comprises 205 residues: FMN reductase (NADH) RutF (205 aa).

Positions 171–205 (PRAPRSGSAPAEPARAARALGARPAEGPALALRSA) are disordered.

Belongs to the non-flavoprotein flavin reductase family. RutF subfamily.

It catalyses the reaction FMNH2 + NAD(+) = FMN + NADH + 2 H(+). In terms of biological role, catalyzes the reduction of FMN to FMNH2 which is used to reduce pyrimidine by RutA via the Rut pathway. This Methylorubrum extorquens (strain DSM 6343 / CIP 106787 / DM4) (Methylobacterium extorquens) protein is FMN reductase (NADH) RutF.